Consider the following 319-residue polypeptide: Beta-ketoacyl-[acyl-carrier-protein] synthase III (319 aa).

Residues Cys-113 and His-246 contribute to the active site. Residues 247-251 (QANIR) are ACP-binding. Residue Asn-276 is part of the active site.

This sequence belongs to the thiolase-like superfamily. FabH family. As to quaternary structure, homodimer.

It localises to the cytoplasm. The enzyme catalyses malonyl-[ACP] + acetyl-CoA + H(+) = 3-oxobutanoyl-[ACP] + CO2 + CoA. It functions in the pathway lipid metabolism; fatty acid biosynthesis. Its function is as follows. Catalyzes the condensation reaction of fatty acid synthesis by the addition to an acyl acceptor of two carbons from malonyl-ACP. Catalyzes the first condensation reaction which initiates fatty acid synthesis and may therefore play a role in governing the total rate of fatty acid production. Possesses both acetoacetyl-ACP synthase and acetyl transacylase activities. Its substrate specificity determines the biosynthesis of branched-chain and/or straight-chain of fatty acids. The polypeptide is Beta-ketoacyl-[acyl-carrier-protein] synthase III (Ehrlichia ruminantium (strain Gardel)).